The following is a 31-amino-acid chain: Photosystem II reaction center protein T (31 aa).

Residues 3–23 traverse the membrane as a helical segment; that stretch reads ALVYTFLLIGTLGVIFFAIFF.

This sequence belongs to the PsbT family. As to quaternary structure, PSII is composed of 1 copy each of membrane proteins PsbA, PsbB, PsbC, PsbD, PsbE, PsbF, PsbH, PsbI, PsbJ, PsbK, PsbL, PsbM, PsbT, PsbY, PsbZ, Psb30/Ycf12, at least 3 peripheral proteins of the oxygen-evolving complex and a large number of cofactors. It forms dimeric complexes.

The protein resides in the plastid. It localises to the chloroplast thylakoid membrane. Functionally, found at the monomer-monomer interface of the photosystem II (PS II) dimer, plays a role in assembly and dimerization of PSII. PSII is a light-driven water plastoquinone oxidoreductase, using light energy to abstract electrons from H(2)O, generating a proton gradient subsequently used for ATP formation. This is Photosystem II reaction center protein T from Euglena gracilis.